The following is an 895-amino-acid chain: MRMFETRAREWILLVKLVLFTSIWQLASALGSMSSIAISYGEGGSVFCGLKSDGSHLVVCYGSNSAILYGTPGHLQFIGLTGGDGFMCGLLMLSHQPYCWGNSAFIQMGVPQPMTKGAEYLEVSAGDYHLCGLRKPIVGRRKNSNIISSSLVDCWGYNMTRNFVFDKQLHSLSAGSEFNCALSSKDKSVFCWGDENSSQVISLIPKEKKFQKIAAGGYHVCGILDGLESRVLCWGKSLEFEEEVTGTSTEEKILDLPPKEPLLAVVGGKFYACGIKRYDHSAVCWGFFVNRSTPAPTGIGFYDLAAGNYFTCGVLTGTSMSPVCWGLGFPASIPLAVSPGLCIDTPCPPGTHELSNQENSPCKFTGSHICLPCSTSCPPGMYQKSVCTERSDQVCVYNCSSCSSHDCSSNCSSSATSGGKEKGKFWSLQLPIATAEIGFALFLVAVVSITAALYIRYRLRNCRCSENDTRSSKDSAFTKDNGKIRPDLDELQKRRRARVFTYEELEKAADGFKEESIVGKGSFSCVYKGVLRDGTTVAVKRAIMSSDKQKNSNEFRTELDLLSRLNHAHLLSLLGYCEECGERLLVYEFMAHGSLHNHLHGKNKALKEQLDWVKRVTIAVQAARGIEYLHGYACPPVIHRDIKSSNILIDEEHNARVADFGLSLLGPVDSGSPLAELPAGTLGYLDPEYYRLHYLTTKSDVYSFGVLLLEILSGRKAIDMHYEEGNIVEWAVPLIKAGDINALLDPVLKHPSEIEALKRIVSVACKCVRMRGKDRPSMDKVTTALERALAQLMGNPSSEQPILPTEVVLGSSRMHKKSWRIGSKRSGSENTEFRGGSWITFPSVTSSQRRKSSASEGDVAEEEDEGRKQQEALRSLEEEIGPASPGQSLFLHHNF.

The N-terminal stretch at 1–29 is a signal peptide; it reads MRMFETRAREWILLVKLVLFTSIWQLASA. Residues 30–434 are Extracellular-facing; it reads LGSMSSIAIS…FWSLQLPIAT (405 aa). 7 repeat units span residues 38 to 73, 77 to 112, 130 to 167, 169 to 202, 210 to 245, 262 to 296, and 301 to 339. The 7 X 36 AA repeats stretch occupies residues 38–339; the sequence is ISYGEGGSVF…PASIPLAVSP (302 aa). N-linked (GlcNAc...) asparagine glycans are attached at residues N158 and N196. A glycan (N-linked (GlcNAc...) asparagine) is linked at N290. The stretch at 346–395 is one TNFR-Cys repeat; it reads PCPPGTHELSNQENSPCKFTGSHICLPCSTSCPPGMYQKSVCTERSDQVC. 3 cysteine pairs are disulfide-bonded: C347–C370, C373–C387, and C377–C395. Residues N398 and N410 are each glycosylated (N-linked (GlcNAc...) asparagine). Residues 435 to 455 traverse the membrane as a helical segment; that stretch reads AEIGFALFLVAVVSITAALYI. Residues 456-895 lie on the Cytoplasmic side of the membrane; it reads RYRLRNCRCS…GQSLFLHHNF (440 aa). The residue at position 475 (S475) is a Phosphoserine. The Protein kinase domain occupies 512-789; sequence FKEESIVGKG…KVTTALERAL (278 aa). Residues 518 to 526 and K540 each bind ATP; that span reads VGKGSFSCV. D641 acts as the Proton acceptor in catalysis. The interval 818-895 is disordered; that stretch reads SWRIGSKRSG…GQSLFLHHNF (78 aa). Basic and acidic residues predominate over residues 865-877; that stretch reads EGRKQQEALRSLE.

Belongs to the protein kinase superfamily. Ser/Thr protein kinase family. Homodimer. Interacts with PP2A3. Post-translationally, autophosphorylated and phosphorylated by ALE2. As to expression, expressed in seedlings, floral buds, siliques, leaves, shoot apical meristems (SAM), and, to a lower extent, in roots.

Its subcellular location is the cell membrane. It is found in the endosome. The protein localises to the multivesicular body membrane. The enzyme catalyses L-seryl-[protein] + ATP = O-phospho-L-seryl-[protein] + ADP + H(+). The catalysed reaction is L-threonyl-[protein] + ATP = O-phospho-L-threonyl-[protein] + ADP + H(+). Functionally, controls formative cell division in meristems, including root tips and lateral root initiation zones of the pericycle, in response to CLE40 signal. Acts with CLE40p peptide as a ligand-receptor pair in a signal transduction pathway, coordinating movement of the root tip and organization of cell divisions in the root meristem. Required during embryogenesis and development, probably for the differentiation of protoderm and epidermal cells. Involved in the regulation of cellular organization during the development of sepal margins and ovule integument outgrowth and promotes giant cell formation. Can phosphorylate ALE2. This is Serine/threonine-protein kinase-like protein ACR4 from Arabidopsis thaliana (Mouse-ear cress).